A 671-amino-acid chain; its full sequence is UvrABC system protein B (671 aa).

Positions 26-183 constitute a Helicase ATP-binding domain; that stretch reads EGLENGLAHQ…RRLSELQYSR (158 aa). Residue 39–46 coordinates ATP; that stretch reads GVTGSGKT. The short motif at 92-115 is the Beta-hairpin element; the sequence is YYDYYQPEAYVPSSDTFIEKDASV. The 163-residue stretch at 431 to 593 folds into the Helicase C-terminal domain; that stretch reads QVDDLLSEIR…IIPQGLNKKI (163 aa). The 36-residue stretch at 631–666 folds into the UVR domain; the sequence is DQKIRELEAKMYTYAQNLEFEQAAELRDQVHQLRQQ.

It belongs to the UvrB family. Forms a heterotetramer with UvrA during the search for lesions. Interacts with UvrC in an incision complex.

It is found in the cytoplasm. The UvrABC repair system catalyzes the recognition and processing of DNA lesions. A damage recognition complex composed of 2 UvrA and 2 UvrB subunits scans DNA for abnormalities. Upon binding of the UvrA(2)B(2) complex to a putative damaged site, the DNA wraps around one UvrB monomer. DNA wrap is dependent on ATP binding by UvrB and probably causes local melting of the DNA helix, facilitating insertion of UvrB beta-hairpin between the DNA strands. Then UvrB probes one DNA strand for the presence of a lesion. If a lesion is found the UvrA subunits dissociate and the UvrB-DNA preincision complex is formed. This complex is subsequently bound by UvrC and the second UvrB is released. If no lesion is found, the DNA wraps around the other UvrB subunit that will check the other stand for damage. This chain is UvrABC system protein B, found in Yersinia pestis bv. Antiqua (strain Antiqua).